A 207-amino-acid chain; its full sequence is Urease accessory protein UreG (207 aa).

14–21 (GPVGSGKT) provides a ligand contact to GTP.

It belongs to the SIMIBI class G3E GTPase family. UreG subfamily. In terms of assembly, homodimer. UreD, UreF and UreG form a complex that acts as a GTP-hydrolysis-dependent molecular chaperone, activating the urease apoprotein by helping to assemble the nickel containing metallocenter of UreC. The UreE protein probably delivers the nickel.

The protein localises to the cytoplasm. Its function is as follows. Facilitates the functional incorporation of the urease nickel metallocenter. This process requires GTP hydrolysis, probably effectuated by UreG. The polypeptide is Urease accessory protein UreG (Chelativorans sp. (strain BNC1)).